We begin with the raw amino-acid sequence, 364 residues long: Chorismate synthase (364 aa).

An NADP(+)-binding site is contributed by Arg-47. FMN is bound by residues 124–126, Gly-287, 302–306, and Arg-328; these read RAS and KPTAT.

It belongs to the chorismate synthase family. As to quaternary structure, homotetramer. Requires FMNH2 as cofactor.

It carries out the reaction 5-O-(1-carboxyvinyl)-3-phosphoshikimate = chorismate + phosphate. It participates in metabolic intermediate biosynthesis; chorismate biosynthesis; chorismate from D-erythrose 4-phosphate and phosphoenolpyruvate: step 7/7. In terms of biological role, catalyzes the anti-1,4-elimination of the C-3 phosphate and the C-6 proR hydrogen from 5-enolpyruvylshikimate-3-phosphate (EPSP) to yield chorismate, which is the branch point compound that serves as the starting substrate for the three terminal pathways of aromatic amino acid biosynthesis. This reaction introduces a second double bond into the aromatic ring system. This is Chorismate synthase from Prochlorococcus marinus (strain MIT 9515).